A 549-amino-acid polypeptide reads, in one-letter code: Glucose-6-phosphate isomerase (549 aa).

Glutamate 352 acts as the Proton donor in catalysis. Catalysis depends on residues histidine 383 and lysine 511.

Belongs to the GPI family.

The protein localises to the cytoplasm. The enzyme catalyses alpha-D-glucose 6-phosphate = beta-D-fructose 6-phosphate. It participates in carbohydrate biosynthesis; gluconeogenesis. The protein operates within carbohydrate degradation; glycolysis; D-glyceraldehyde 3-phosphate and glycerone phosphate from D-glucose: step 2/4. Catalyzes the reversible isomerization of glucose-6-phosphate to fructose-6-phosphate. This Methylocella silvestris (strain DSM 15510 / CIP 108128 / LMG 27833 / NCIMB 13906 / BL2) protein is Glucose-6-phosphate isomerase.